The sequence spans 349 residues: Phosphoribosylformylglycinamidine cyclo-ligase (349 aa).

Belongs to the AIR synthase family.

It localises to the cytoplasm. It catalyses the reaction 2-formamido-N(1)-(5-O-phospho-beta-D-ribosyl)acetamidine + ATP = 5-amino-1-(5-phospho-beta-D-ribosyl)imidazole + ADP + phosphate + H(+). The protein operates within purine metabolism; IMP biosynthesis via de novo pathway; 5-amino-1-(5-phospho-D-ribosyl)imidazole from N(2)-formyl-N(1)-(5-phospho-D-ribosyl)glycinamide: step 2/2. In Jannaschia sp. (strain CCS1), this protein is Phosphoribosylformylglycinamidine cyclo-ligase.